The sequence spans 373 residues: Peptide chain release factor 2 (373 aa).

Residue Gln251 is modified to N5-methylglutamine.

This sequence belongs to the prokaryotic/mitochondrial release factor family. Post-translationally, methylated by PrmC. Methylation increases the termination efficiency of RF2.

The protein localises to the cytoplasm. Peptide chain release factor 2 directs the termination of translation in response to the peptide chain termination codons UGA and UAA. The protein is Peptide chain release factor 2 of Salinispora tropica (strain ATCC BAA-916 / DSM 44818 / JCM 13857 / NBRC 105044 / CNB-440).